The chain runs to 58 residues: Succinate dehydrogenase subunit 8B, mitochondrial (58 aa).

In terms of assembly, component of complex II composed of eight subunits in plants: four classical SDH subunits SDH1, SDH2, SDH3 and SDH4 (a flavoprotein (FP), an iron-sulfur protein (IP), and a cytochrome b composed of a large and a small subunit.), as well as four subunits unknown in mitochondria from bacteria and heterotrophic eukaryotes.

Its subcellular location is the mitochondrion inner membrane. Its pathway is carbohydrate metabolism; tricarboxylic acid cycle. This is Succinate dehydrogenase subunit 8B, mitochondrial from Oryza sativa subsp. japonica (Rice).